A 223-amino-acid polypeptide reads, in one-letter code: uncharacterized protein (223 aa).

A mitochondrion-targeting transit peptide spans 1 to 12 (MFRSLVRKTTPL).

The protein resides in the mitochondrion. This is an uncharacterized protein from Candida albicans (strain WO-1) (Yeast).